A 732-amino-acid polypeptide reads, in one-letter code: Polyphosphate kinase (732 aa).

An ATP-binding site is contributed by N61. The Mg(2+) site is built by R417 and R447. Residue H477 is the Phosphohistidine intermediate of the active site. ATP-binding residues include Y510, R606, and H634. The tract at residues 699–718 (DGTYRQRQPAPGEAERGTHS) is disordered.

The protein belongs to the polyphosphate kinase 1 (PPK1) family. Requires Mg(2+) as cofactor. In terms of processing, an intermediate of this reaction is the autophosphorylated ppk in which a phosphate is covalently linked to a histidine residue through a N-P bond.

The enzyme catalyses [phosphate](n) + ATP = [phosphate](n+1) + ADP. In terms of biological role, catalyzes the reversible transfer of the terminal phosphate of ATP to form a long-chain polyphosphate (polyP). This chain is Polyphosphate kinase, found in Thermosynechococcus vestitus (strain NIES-2133 / IAM M-273 / BP-1).